We begin with the raw amino-acid sequence, 231 residues long: DNA damage response protein C (231 aa).

In terms of assembly, homodimer.

Its subcellular location is the cytoplasm. It is found in the nucleoid. Its function is as follows. Appears to contribute to D.radiodurans capacity to survive exposure to ionizing radiation. Likely functions as a DNA damage-induced nucleoid-associated protein (NAP) that contributes to the enhanced level of nucleoid compaction after irradiation by bridging DNA duplexes, thereby limiting the dispersion of the fragmented genome immediately after irradiation to facilitate subsequent DNA repair. In vitro, binds both ssDNA and dsDNA, and is able to compact circular DNA, circularize linear DNA, anneal complementary DNA strands and protect DNA from nucleases. This is DNA damage response protein C from Deinococcus radiodurans (strain ATCC 13939 / DSM 20539 / JCM 16871 / CCUG 27074 / LMG 4051 / NBRC 15346 / NCIMB 9279 / VKM B-1422 / R1).